The primary structure comprises 1099 residues: MAAAAASALGASAPKALAPADGPIVAGLDKLVNLEGVHDLFEAMRGAYGEDPAWKGLMSCDVVYLKDITTAIGVKDTSVGIFRKFSDGCSWCPTGAECFLSMKDLAYMKAQSAKAQRLTASLATTSNLIARAMRAESELKRARDEERKVDARYKDILEHSLAARKALQKELDETRERELHLLKELGKRSSIRTKAFSFFDWLFMAVVFFLFLHYTSAECVKPDFGCLVVNSNLPVPSLTFHDVMARCYNTFGNIVLSSQIDAARLREECEQSANKFLGTHIGDPAHKVWCENRLETLIPVECDSSEFLEIFTSNLNAFMVSVSQFYKTISYYKLDALVTFAFSAALATNKLKMVMVLPLLLVALYLNVPPITVTIASVIFQPLILPFVGFQLVFPNFLPYNLFVAWVWMVCQAFFSSDGVKLLVSVSTALVQVVFLAVWSISVIVLQQLSIPMVAQILLFVATLTVSVGVKFANSTITVVHPDGNTEKVSRVTLVRQSMAKRISQIKQSLTIRGVIPSGPNRFDSIVVVEGQGGSGVGWRFMNSIFTAGHVVQGSKFVTIKSESTQVKVKVKRVIDLFECVDTLVEIPLTKEFQHIKPLRLAKKVEDSYLQLCAFKPDMVEKASYQGWCTIDSGFIFNSFNTQFGNSGAPYVDSDGRLVGMHLGSQGVISQGVVLVDTLKTQFLAQQSQIDDQLMERIIEGTKVSHAAILTELDRMRTKVEEVALVSARVNQLESQLKDLYEFSSNSIKCLSDDIEKMVCAQLFDEINLQSVMEKISALPPTEKLAKLVEVFVEQKKKGKTKRTARGGKHALGKKYLSKAHFSRMRMLTEEEYNKMVEDGFSPDEIKEVVDQLREQAWQNYLIDNDIGEDDDLDWYDDMLEDERLNEEIDRRVEAALEDRGELAYQKIRRTFVDQALIHLITLKKGNWQTTKVECQPEREEAYKEQFQKAVKQEDLTEGTSYAIYSAGDATILIENKEIDHTEIKPVTTGAKTVQEYPKDARTTVATFDDNKKDIVKTKRTTEIVLEQRKKTCRTCGETRPHNHKMCRDRHTRRFCFWCGVVHSDVEGHSRDLKCPKCSAGFANLREMEQHAVTTCSKN.

6 helical membrane-spanning segments follow: residues 195–215 (AFSFFDWLFMAVVFFLFLHYT), 329–348 (ISYYKLDALVTFAFSAALAT), 353–373 (MVMVLPLLLVALYLNVPPITV), 397–417 (FLPYNLFVAWVWMVCQAFFSS), 426–446 (VSTALVQVVFLAVWSISVIVL), and 450–470 (SIPMVAQILLFVATLTVSVGV). Active-site charge relay system; for serine protease activity residues include histidine 550, aspartate 582, and serine 647. Tyrosine 833 carries the post-translational modification O-(5'-phospho-RNA)-tyrosine.

Belongs to the astroviridae polyprotein 1A family. In terms of assembly, monomer. Cleaved by the viral and host proteases. The protease is probably autocatalytically cleaved.

The protein resides in the host membrane. The catalysed reaction is RNA(n) + a ribonucleoside 5'-triphosphate = RNA(n+1) + diphosphate. Responsible for the cleavage of the polyprotein into functional products. Functionally, protein covalently attached to the 5' extremity of the genomic and subgenomic RNAs. It may serve as a primer for the replicase. This is Non-structural polyprotein 1A (ORF1) from Turkey astrovirus 1 (TAstV-1).